A 327-amino-acid polypeptide reads, in one-letter code: Transcription factor bHLH71 (327 aa).

Disordered regions lie at residues 46–88 and 151–176; these read ISEI…NQRM and AKLN…HQPS. A compositionally biased stretch (basic residues) spans 65–76; that stretch reads RGKKRRRRKPRV. The span at 77–88 shows a compositional bias: basic and acidic residues; the sequence is CKNEEEAENQRM. The bHLH domain occupies 85-136; it reads NQRMTHIAVERNRRRQMNQHLSVLRSLMPQPFAHKGDQASIVGGAIDFIKEL. Residues 152–169 show a composition bias toward polar residues; that stretch reads KLNQSVTSSTSQDSNGEQ.

Homodimer. Interacts with FAMA. As to expression, expressed in leaves, stems, and flowers.

The protein resides in the nucleus. Functionally, transcription factor. May be involved in the differentiation of stomatal guard cells. The sequence is that of Transcription factor bHLH71 (BHLH71) from Arabidopsis thaliana (Mouse-ear cress).